Consider the following 239-residue polypeptide: Aspartate/glutamate leucyltransferase (239 aa).

This sequence belongs to the R-transferase family. Bpt subfamily.

It localises to the cytoplasm. The enzyme catalyses N-terminal L-glutamyl-[protein] + L-leucyl-tRNA(Leu) = N-terminal L-leucyl-L-glutamyl-[protein] + tRNA(Leu) + H(+). It catalyses the reaction N-terminal L-aspartyl-[protein] + L-leucyl-tRNA(Leu) = N-terminal L-leucyl-L-aspartyl-[protein] + tRNA(Leu) + H(+). Functions in the N-end rule pathway of protein degradation where it conjugates Leu from its aminoacyl-tRNA to the N-termini of proteins containing an N-terminal aspartate or glutamate. The sequence is that of Aspartate/glutamate leucyltransferase from Campylobacter jejuni subsp. jejuni serotype O:23/36 (strain 81-176).